The sequence spans 360 residues: Probable arginine kinase ZC434.8 (360 aa).

In terms of domain architecture, Phosphagen kinase N-terminal spans 10-92 (SIEEVYTKLQ…FNPVIEEYHN (83 aa)). Residue 65–69 (GVGIY) participates in substrate binding. A Phosphagen kinase C-terminal domain is found at 122-359 (FIVSTRIRCG…KKLIELEKAA (238 aa)). ATP contacts are provided by residues 125 to 129 (STRIR) and histidine 189. Glutamate 229 contacts substrate. Arginine 233 contacts ATP. Residue cysteine 275 participates in substrate binding. ATP-binding positions include 284–288 (RASVH), 312–317 (RGIHGE), and aspartate 327. Glutamate 317 is a substrate binding site.

The protein belongs to the ATP:guanido phosphotransferase family.

The enzyme catalyses L-arginine + ATP = N(omega)-phospho-L-arginine + ADP + H(+). The sequence is that of Probable arginine kinase ZC434.8 from Caenorhabditis elegans.